Reading from the N-terminus, the 102-residue chain is RNA-binding protein Hfq (102 aa).

One can recognise a Sm domain in the interval 9 to 68; it reads DPFLNALRRERVPVSIYLVNGIKLQGQIESFDQFVILLKNTVSQMVYKHAISTVVPSRPV. The disordered stretch occupies residues 63–102; sequence VPSRPVSHHSNNAGGGASNNYHHGSNVQGSTAQQDSEETE. Over residues 70-88 the composition is skewed to low complexity; that stretch reads HHSNNAGGGASNNYHHGSN.

The protein belongs to the Hfq family. As to quaternary structure, homohexamer.

Functionally, RNA chaperone that binds small regulatory RNA (sRNAs) and mRNAs to facilitate mRNA translational regulation in response to envelope stress, environmental stress and changes in metabolite concentrations. Also binds with high specificity to tRNAs. The chain is RNA-binding protein Hfq from Salmonella choleraesuis (strain SC-B67).